Here is a 581-residue protein sequence, read N- to C-terminus: Guanine nucleotide-binding protein-like 3 homolog (581 aa).

The segment covering 1 to 49 (MALKRLKTKKSKRLTGRLKHKIEKKVRDHNKKERRAAKKNPKKGSKKQK) has biased composition (basic residues). A disordered region spans residues 1–50 (MALKRLKTKKSKRLTGRLKHKIEKKVRDHNKKERRAAKKNPKKGSKKQKL). Residues 64–108 (LKEVEEAKQRQEAERLARREAFKAEREQNKFKTLESMVEDADMRS) adopt a coiled-coil conformation. A Phosphoserine modification is found at Ser-99. One can recognise a CP-type G domain in the interval 141–325 (FKEFRKVIEN…LIDCPGIVFT (185 aa)). Residues 189-192 (NKAD), 274-281 (GIPNVGKS), and 318-321 (DCPG) contribute to the GTP site. Over residues 500-517 (KPAKGRKRKLDEEKEKVD) the composition is skewed to basic and acidic residues. A disordered region spans residues 500–519 (KPAKGRKRKLDEEKEKVDPS).

The protein belongs to the TRAFAC class YlqF/YawG GTPase family.

The protein resides in the nucleus. It localises to the nucleolus. In terms of biological role, may play a role in regulating cellular proliferation. This is Guanine nucleotide-binding protein-like 3 homolog (Ns1) from Drosophila melanogaster (Fruit fly).